Here is a 46-residue protein sequence, read N- to C-terminus: Photosystem II reaction center protein K (46 aa).

A propeptide spanning residues 1–9 (MLILFNTFA) is cleaved from the precursor. A helical membrane pass occupies residues 25–45 (LPLIPLFFFLLVFVWQAAVGF).

It belongs to the PsbK family. PSII is composed of 1 copy each of membrane proteins PsbA, PsbB, PsbC, PsbD, PsbE, PsbF, PsbH, PsbI, PsbJ, PsbK, PsbL, PsbM, PsbT, PsbX, PsbY, Psb30/Ycf12, peripheral proteins PsbO, CyanoQ (PsbQ), PsbU, PsbV and a large number of cofactors. It forms dimeric complexes.

It localises to the cellular thylakoid membrane. Functionally, one of the components of the core complex of photosystem II (PSII). PSII is a light-driven water:plastoquinone oxidoreductase that uses light energy to abstract electrons from H(2)O, generating O(2) and a proton gradient subsequently used for ATP formation. It consists of a core antenna complex that captures photons, and an electron transfer chain that converts photonic excitation into a charge separation. In Prochlorococcus marinus (strain MIT 9301), this protein is Photosystem II reaction center protein K.